We begin with the raw amino-acid sequence, 51 residues long: Sperm protamine P1 (51 aa).

Belongs to the protamine P1 family. Testis.

The protein localises to the nucleus. The protein resides in the chromosome. In terms of biological role, protamines substitute for histones in the chromatin of sperm during the haploid phase of spermatogenesis. They compact sperm DNA into a highly condensed, stable and inactive complex. The polypeptide is Sperm protamine P1 (PRM1) (Trachypithecus francoisi (Francois' leaf monkey)).